Reading from the N-terminus, the 427-residue chain is MSNNQILFERAQKTIPGGVNSPVRAFRSVGGTPRFVARAQGPYFWDADGKQYIDYIGSWGPMIVGHVHPEVLSAVQNVLADGFSFGAPTEAEIEIAEEICKLVPSIEQVRMVSSGTEATMSALRLARGFTGRSRIVKFEGCYHGHADSLLVKAGSGLLTFGNPTSAGVPADIAKHTTVLEYNNVAALEEAFGAFGDEIAAVIVEPVAGNMNLVRGTPEFLNALRALCTKHGAVLIFDEVMCGFRVALGGAQTYYGIAADLTCLGKVIGGGMPAAAFGGRRDIMAHLAPLGGVYQAGTLSGNPIAVAAGLKTLQLIQAPGFYDALTAQTKRLADGLAAEARAAGVPFAADSIGAMFGLYFAERVPGSFAEVTKSNVERFNRFFHLMLDEGVYFAPSAYEAGFVSSTHDDAVIDATLAAARRAFAALAA.

The residue at position 265 (K265) is an N6-(pyridoxal phosphate)lysine.

The protein belongs to the class-III pyridoxal-phosphate-dependent aminotransferase family. HemL subfamily. As to quaternary structure, homodimer. Pyridoxal 5'-phosphate is required as a cofactor.

It localises to the cytoplasm. The enzyme catalyses (S)-4-amino-5-oxopentanoate = 5-aminolevulinate. It functions in the pathway porphyrin-containing compound metabolism; protoporphyrin-IX biosynthesis; 5-aminolevulinate from L-glutamyl-tRNA(Glu): step 2/2. In Burkholderia cenocepacia (strain HI2424), this protein is Glutamate-1-semialdehyde 2,1-aminomutase.